We begin with the raw amino-acid sequence, 309 residues long: MEKVLVFGHKNPDTDAICSAIAYAELKKELGMNAEPVRLGEISGETQFALDYFKVEGPRFVETVANEVDNVILVDHNERQQSANDIESVRVLEVIDHHRIANFETSDPIYYRCEPVGCTATILNKMYKENGVTIRKEVAGLMLSAIISDSLLFKSPTCTEQDVAAARELAEIADVDADNYGLEMLKAGADLSGKTMEQLISLDAKEFQMGNAKVEIAQVNAVDTNDVLVHQAELEKVISAVVEEKGLDLFLFVVTDILTNDSVGLAIGKAANVVEKAYNVPLENNTATLKGVVSRKKQIVPVLTEAFQA.

The Mn(2+) site is built by His9, Asp13, Asp15, Asp75, His97, and Asp149.

It belongs to the PPase class C family. Mn(2+) serves as cofactor.

It localises to the cytoplasm. It catalyses the reaction diphosphate + H2O = 2 phosphate + H(+). This is Probable manganese-dependent inorganic pyrophosphatase from Bacillus cereus (strain 03BB102).